Reading from the N-terminus, the 511-residue chain is Putative polyol transporter 2 (511 aa).

The next 12 membrane-spanning stretches (helical) occupy residues 25 to 45 (FAFA…YDIG), 63 to 83 (VQLE…SGAA), 94 to 114 (YTIV…GFAT), 117 to 137 (PFIM…MMIA), 156 to 176 (FPEI…YFFA), 186 to 206 (FMLG…LAMP), 284 to 304 (ILIA…DAVV), 324 to 344 (LATV…TCLV), 351 to 371 (ALLL…GTSL), 384 to 404 (WAIG…SLGA), 424 to 444 (GASL…MTFL), and 454 to 474 (GAFL…FTFL).

Belongs to the major facilitator superfamily. Sugar transporter (TC 2.A.1.1) family.

It is found in the membrane. In terms of biological role, plasma membrane sugar-proton symporter. The sequence is that of Putative polyol transporter 2 (PLT2) from Arabidopsis thaliana (Mouse-ear cress).